The primary structure comprises 306 residues: MTAIDFHGVFPAMCTPFHQDGSIDFETLRDDAQRLESAGVDGLVPVGSTGESATLSHDEHIEVVEAVIDAVDDVPVIAGSGSNNTKEALELSRRSAEAGADALLLISPYYNKPEQQGFIDHYTTLADAVDLPQIVYNVPSRTGQNIEPDTAAELASHPNIRAYKAASGDMNQISEIIERTRDEDFAVLSGDDGMTLPMLSVGGTGCISVSANIEPERTCAMVGAALSGDFERAQAIHHELGPLFRAMFVETNPIPVKEAMRIRGYGPAHLRSPLTRLSDEHLDHLRDVLATLETEDLEDEYAEAER.

A pyruvate-binding site is contributed by threonine 49. Tyrosine 136 serves as the catalytic Proton donor/acceptor. Catalysis depends on lysine 164, which acts as the Schiff-base intermediate with substrate. Isoleucine 207 contributes to the pyruvate binding site.

The protein belongs to the DapA family. In terms of assembly, homotetramer; dimer of dimers.

It localises to the cytoplasm. The catalysed reaction is L-aspartate 4-semialdehyde + pyruvate = (2S,4S)-4-hydroxy-2,3,4,5-tetrahydrodipicolinate + H2O + H(+). The protein operates within amino-acid biosynthesis; L-lysine biosynthesis via DAP pathway; (S)-tetrahydrodipicolinate from L-aspartate: step 3/4. Its function is as follows. Catalyzes the condensation of (S)-aspartate-beta-semialdehyde [(S)-ASA] and pyruvate to 4-hydroxy-tetrahydrodipicolinate (HTPA). The chain is 4-hydroxy-tetrahydrodipicolinate synthase from Haloarcula marismortui (strain ATCC 43049 / DSM 3752 / JCM 8966 / VKM B-1809) (Halobacterium marismortui).